We begin with the raw amino-acid sequence, 382 residues long: F-box protein At3g27290 (382 aa).

Residues 16 to 105 form the F-box domain; that stretch reads RKLELGLGEF…VDQMLFETLS (90 aa).

The protein is F-box protein At3g27290 of Arabidopsis thaliana (Mouse-ear cress).